Reading from the N-terminus, the 334-residue chain is Tryptophan--tRNA ligase (334 aa).

ATP is bound by residues Q11–T13 and G19–N20. The 'HIGH' region motif lies at P12–N20. D135 lines the L-tryptophan pocket. Residues G147 to D149, I186, and K195 to S199 contribute to the ATP site. Residues K195 to S199 carry the 'KMSKS' region motif.

The protein belongs to the class-I aminoacyl-tRNA synthetase family. Homodimer.

It is found in the cytoplasm. The catalysed reaction is tRNA(Trp) + L-tryptophan + ATP = L-tryptophyl-tRNA(Trp) + AMP + diphosphate + H(+). Functionally, catalyzes the attachment of tryptophan to tRNA(Trp). The polypeptide is Tryptophan--tRNA ligase (Blochmanniella floridana).